Reading from the N-terminus, the 537-residue chain is tRNA(His) guanylyltransferase 2 (537 aa).

3 residues coordinate Mg(2+): Asp-307, Gly-308, and Asp-354. GTP contacts are provided by residues 307 to 312 and 353 to 354; these read DGCHFH and SD.

Belongs to the tRNA(His) guanylyltransferase family. Requires Mg(2+) as cofactor.

The protein localises to the nucleus. The protein resides in the nucleoplasm. The catalysed reaction is a 5'-end ribonucleotide-tRNA(His) + GTP + ATP + H2O = a 5'-end phospho-guanosine-ribonucleotide-tRNA(His) + AMP + 2 diphosphate + H(+). Functionally, adds a GMP to the 5'-end of tRNA(His) after transcription and RNase P cleavage. In Arabidopsis thaliana (Mouse-ear cress), this protein is tRNA(His) guanylyltransferase 2 (THG2).